Reading from the N-terminus, the 141-residue chain is Lutropin subunit beta (141 aa).

A signal peptide spans 1–20 (MEMFQGLLLWLLLNTGGAWA). Disulfide bonds link cysteine 29–cysteine 77, cysteine 43–cysteine 92, cysteine 46–cysteine 130, cysteine 54–cysteine 108, cysteine 58–cysteine 110, and cysteine 113–cysteine 120. N-linked (GlcNAc...) asparagine glycosylation is present at asparagine 33.

Belongs to the glycoprotein hormones subunit beta family. Heterodimer of a common alpha chain and a unique beta chain which confers biological specificity to thyrotropin, lutropin, follitropin and gonadotropin.

Its subcellular location is the secreted. Its function is as follows. Promotes spermatogenesis and ovulation by stimulating the testes and ovaries to synthesize steroids. This is Lutropin subunit beta (LHB) from Ailuropoda melanoleuca (Giant panda).